Reading from the N-terminus, the 157-residue chain is Protein UXT (157 aa).

Belongs to the UXT family. Homohexamer. Component of the PAQosome complex which is responsible for the biogenesis of several protein complexes and which consists of R2TP complex members RUVBL1, RUVBL2, RPAP3 and PIH1D1, URI complex members PFDN2, PFDN6, PDRG1, UXT and URI1 as well as ASDURF, POLR2E and DNAAF10/WDR92. Interacts with LRPPRC. Interacts with androgen receptor AR (via N-terminus). Interacts with estrogen receptor ESR1; the interaction relocalizes ESR1 from the nucleus to the cytoplasm. In the nucleus, interacts specifically with RELA (via RHD domain) and forms a dynamic complex with NF-kappa-B and is recruited to the NF-kappa-B enhanceosome upon stimulation. Interacts with MECOM. Interacts with URI1. As to quaternary structure, part of complex I composed of TNF-alpha receptor TNFRSF1A, TRADD, TRAF2 and RIPK1 formed in response to TNF-alpha stimulation. Within the complex, interacts (via TPQE motif) with TRAF2; the interaction prevents the recruitment of FADD and CASP8/caspase 8 to complex I. Ubiquitinated by E3 ubiquitin-protein ligase complex containing FBXO7; leading to proteasomal degradation. As to expression, ubiquitous. Expressed in prostate epithelial cells. Expressed in mammary epithelial cells. Highest levels in the heart, skeletal muscle, pancreas, kidney, liver, adrenal gland, peripheral blood leukocytes, lymph node, prostate, and thyroid and the lowest levels in bladder and uterus. Overexpressed in a number of tumor tissues.

It is found in the cytoplasm. Its subcellular location is the nucleus. The protein resides in the cytoskeleton. The protein localises to the microtubule organizing center. It localises to the centrosome. It is found in the spindle pole. In terms of biological role, involved in gene transcription regulation. Acts in concert with the corepressor URI1 to regulate androgen receptor AR-mediated transcription. Together with URI1, associates with chromatin to the NKX3-1 promoter region. Negatively regulates the transcriptional activity of the estrogen receptor ESR1 by inducing its translocation into the cytoplasm. May act as nuclear chaperone that facilitates the formation of the NF-kappa-B enhanceosome and thus positively regulates NF-kappa-B transcription activity. Potential component of mitochondrial-associated LRPPRC, a multidomain organizer that potentially integrates mitochondria and the microtubular cytoskeleton with chromosome remodeling. Increasing concentrations of UXT contributes to progressive aggregation of mitochondria and cell death potentially through its association with LRPPRC. Suppresses cell transformation and it might mediate this function by interaction and inhibition of the biological activity of cell proliferation and survival stimulatory factors like MECOM. Plays a role in protecting cells against TNF-alpha-induced apoptosis by preventing the recruitment of FADD and caspase 8 to the apoptotic complex I, composed of TRADD, TRAF2 and RIPK1/RIP. This is Protein UXT (UXT) from Homo sapiens (Human).